The chain runs to 243 residues: Adenosylcobinamide-GDP ribazoletransferase (243 aa).

Helical transmembrane passes span 31–51, 57–77, 109–129, 135–155, and 188–208; these read LLFYPLVGLLFGVILWALNIA, LLLHAALLLAVWVLLSGALHL, IAVVTLVLVLLLKFAALLALI, MALIIVPLIGRAALLGLFLTT, and LVIAGFNAVVALLLAVIVFIW.

Belongs to the CobS family. The cofactor is Mg(2+).

The protein resides in the cell inner membrane. It catalyses the reaction alpha-ribazole + adenosylcob(III)inamide-GDP = adenosylcob(III)alamin + GMP + H(+). The catalysed reaction is alpha-ribazole 5'-phosphate + adenosylcob(III)inamide-GDP = adenosylcob(III)alamin 5'-phosphate + GMP + H(+). It functions in the pathway cofactor biosynthesis; adenosylcobalamin biosynthesis; adenosylcobalamin from cob(II)yrinate a,c-diamide: step 7/7. Functionally, joins adenosylcobinamide-GDP and alpha-ribazole to generate adenosylcobalamin (Ado-cobalamin). Also synthesizes adenosylcobalamin 5'-phosphate from adenosylcobinamide-GDP and alpha-ribazole 5'-phosphate. In Pseudomonas fluorescens (strain Pf0-1), this protein is Adenosylcobinamide-GDP ribazoletransferase.